The chain runs to 501 residues: NAD(P)H-quinone oxidoreductase chain 4, chloroplastic (501 aa).

Transmembrane regions (helical) follow at residues 5–25 (FPWL…IFFL), 38–58 (TCIC…HFQL), 88–108 (IGPI…AWPV), 114–131 (LFYL…GLFS), 135–155 (LLLF…LLSM), 168–188 (FILY…GMGL), 209–229 (ALEI…SPII), 243–263 (HYST…YGLI), 273–293 (AHSL…IYAA), 306–326 (IACS…SITD), 331–351 (GAIL…FLSG), 387–407 (LALP…GIIT), 417–437 (ILIT…LLSM), and 464–484 (FVSI…DCVF).

The protein belongs to the complex I subunit 4 family.

The protein localises to the plastid. It localises to the chloroplast thylakoid membrane. The enzyme catalyses a plastoquinone + NADH + (n+1) H(+)(in) = a plastoquinol + NAD(+) + n H(+)(out). It catalyses the reaction a plastoquinone + NADPH + (n+1) H(+)(in) = a plastoquinol + NADP(+) + n H(+)(out). This Dioscorea elephantipes (Elephant's foot yam) protein is NAD(P)H-quinone oxidoreductase chain 4, chloroplastic.